The following is a 318-amino-acid chain: Taste receptor type 2 member 117 (318 aa).

Residues 1–16 (MQHNLKTIFVISHSTL) are Extracellular-facing. A helical transmembrane segment spans residues 17–37 (TIILFTELVTGIIGNGFMALV). At 38-53 (HCMDWLRRKKISLVNQ) the chain is on the cytoplasmic side. The helical transmembrane segment at 54–74 (ILTALAISRIFQLCLLFISLV) threads the bilayer. The Extracellular segment spans residues 75–93 (ISFSYPDLTTTSLIKVTCN). The chain crosses the membrane as a helical span at residues 94–114 (LWIIVNHFNIWLATCLGIFYF). Residues 115 to 134 (LKISNFSNSLFLYLKWRVEK) are Cytoplasmic-facing. A helical membrane pass occupies residues 135–155 (VVLVTLLVSLVLLTLNSLLIN). Residues 156–189 (LEINICINEYQRNITYSFNSYYHANCHRQMLSLH) lie on the Extracellular side of the membrane. Asparagine 168 carries N-linked (GlcNAc...) asparagine glycosylation. Residues 190-210 (IIFLSVPFVLSLSTFLLLIFS) form a helical membrane-spanning segment. Residues 211-238 (LGTHHKKMQQHVQGRRDASTMAHFKALQ) lie on the Cytoplasmic side of the membrane. Residues 239–259 (TVIAFLLLYSIFILSVLVQIW) traverse the membrane as a helical segment. Over 260–268 (KYELLKKNL) the chain is Extracellular. Residues 269-289 (FILFCQVAYVAFPSFHSYILI) traverse the membrane as a helical segment. At 290-318 (LGDMKMRQACLSVLWWQKFRKNYVEPLDL) the chain is on the cytoplasmic side.

The protein belongs to the G-protein coupled receptor T2R family.

It is found in the membrane. Its function is as follows. Putative taste receptor which may play a role in the perception of bitterness. In Rattus norvegicus (Rat), this protein is Taste receptor type 2 member 117.